The chain runs to 234 residues: Adenosine 5'-phosphosulfate reductase (234 aa).

[4Fe-4S] cluster-binding residues include cysteine 120, cysteine 121, cysteine 203, and cysteine 206. The active-site Nucleophile; cysteine thiosulfonate intermediate is cysteine 229.

It belongs to the PAPS reductase family. CysH subfamily. [4Fe-4S] cluster serves as cofactor.

Its subcellular location is the cytoplasm. The enzyme catalyses [thioredoxin]-disulfide + sulfite + AMP + 2 H(+) = adenosine 5'-phosphosulfate + [thioredoxin]-dithiol. It functions in the pathway sulfur metabolism; hydrogen sulfide biosynthesis; sulfite from sulfate. Its function is as follows. Catalyzes the formation of sulfite from adenosine 5'-phosphosulfate (APS) using thioredoxin as an electron donor. This Bacillus cereus (strain 03BB102) protein is Adenosine 5'-phosphosulfate reductase.